Reading from the N-terminus, the 1260-residue chain is ATP-dependent helicase/deoxyribonuclease subunit B (1260 aa).

It belongs to the helicase family. AddB/RexB type 2 subfamily. As to quaternary structure, heterodimer of AddA and RexB. Requires Mg(2+) as cofactor.

Functionally, the heterodimer acts as both an ATP-dependent DNA helicase and an ATP-dependent, dual-direction single-stranded exonuclease. Recognizes the chi site generating a DNA molecule suitable for the initiation of homologous recombination. This subunit has 5' -&gt; 3' nuclease activity but not helicase activity. The sequence is that of ATP-dependent helicase/deoxyribonuclease subunit B from Limosilactobacillus reuteri (strain DSM 20016) (Lactobacillus reuteri).